A 101-amino-acid polypeptide reads, in one-letter code: Large ribosomal subunit protein uL23 (101 aa).

It belongs to the universal ribosomal protein uL23 family. Part of the 50S ribosomal subunit. Contacts protein L29, and trigger factor when it is bound to the ribosome.

In terms of biological role, one of the early assembly proteins it binds 23S rRNA. One of the proteins that surrounds the polypeptide exit tunnel on the outside of the ribosome. Forms the main docking site for trigger factor binding to the ribosome. This chain is Large ribosomal subunit protein uL23, found in Rhodococcus jostii (strain RHA1).